The sequence spans 164 residues: Lipoprotein signal peptidase (164 aa).

3 helical membrane-spanning segments follow: residues 12–32 (WLWLVVVVLIIDLGSKYLILQ), 70–90 (WFFAGIAIGISVTLVVMMYRS), and 102–122 (ALIIGGALGNLFDRLWHGFVV). Active-site residues include D123 and D141. The helical transmembrane segment at 137-157 (FNLADTAICVGAALIVLEGFL) threads the bilayer.

The protein belongs to the peptidase A8 family.

The protein localises to the cell inner membrane. The catalysed reaction is Release of signal peptides from bacterial membrane prolipoproteins. Hydrolyzes -Xaa-Yaa-Zaa-|-(S,diacylglyceryl)Cys-, in which Xaa is hydrophobic (preferably Leu), and Yaa (Ala or Ser) and Zaa (Gly or Ala) have small, neutral side chains.. Its pathway is protein modification; lipoprotein biosynthesis (signal peptide cleavage). This protein specifically catalyzes the removal of signal peptides from prolipoproteins. The protein is Lipoprotein signal peptidase of Escherichia coli O157:H7.